A 137-amino-acid polypeptide reads, in one-letter code: Small ribosomal subunit protein uS9 (137 aa).

Positions Asp-114–Arg-137 are disordered. Residues Lys-118–Arg-137 are compositionally biased toward basic residues.

Belongs to the universal ribosomal protein uS9 family.

The sequence is that of Small ribosomal subunit protein uS9 from Rhodopirellula baltica (strain DSM 10527 / NCIMB 13988 / SH1).